Consider the following 456-residue polypeptide: Potassium voltage-gated channel subfamily A member 7 (456 aa).

A helical transmembrane segment spans residues 144-164 (VLAVVSVLVILVSIVVFCLET). Residue Asn191 is glycosylated (N-linked (GlcNAc...) asparagine). Residues 209-229 (FFVVETLCICWFSFELLVRLL) form a helical membrane-spanning segment. The S-palmitoyl cysteine moiety is linked to residue Cys231. The chain crosses the membrane as a helical span at residues 241–261 (VMNLIDFVAILPYFVALGTEL). Residues 276–295 (ILRVIRLVRVFRIFKLSRHS) form a helical; Voltage-sensor membrane-spanning segment. The helical transmembrane segment at 312–332 (LGLLIFFLFIGVVLFSSAVYF) threads the bilayer. The Selectivity filter motif lies at 358–363 (TVGYGD). The chain crosses the membrane as a helical span at residues 373 to 393 (IVGSLCAIAGVLTISLPVPVI).

The protein belongs to the potassium channel family. A (Shaker) (TC 1.A.1.2) subfamily. Kv1.7/KCNA7 sub-subfamily. Heterotetramer of potassium channel proteins. In terms of tissue distribution, highly expressed in skeletal muscle, heart and kidney.

It is found in the membrane. It carries out the reaction K(+)(in) = K(+)(out). In terms of biological role, mediates the voltage-dependent potassium ion permeability of excitable membranes. Assuming opened or closed conformations in response to the voltage difference across the membrane, the protein forms a potassium-selective channel through which potassium ions may pass in accordance with their electrochemical gradient. The protein is Potassium voltage-gated channel subfamily A member 7 (KCNA7) of Homo sapiens (Human).